The sequence spans 376 residues: Delta(12) fatty acid desaturase fat-2 (376 aa).

4 consecutive transmembrane segments (helical) span residues 45–65 (ISYL…VPYI), 69–89 (LGWI…SALF), 203–223 (VKCA…FVLC), and 228–248 (YTFV…LVII).

This sequence belongs to the fatty acid desaturase type 1 family.

It localises to the membrane. It catalyses the reaction (9Z)-octadecenoyl-CoA + 2 Fe(II)-[cytochrome b5] + O2 + 2 H(+) = (9Z,12Z)-octadecadienoyl-CoA + 2 Fe(III)-[cytochrome b5] + 2 H2O. It carries out the reaction (9Z)-hexadecenoyl-CoA + 2 Fe(II)-[cytochrome b5] + O2 + 2 H(+) = (9Z,12Z)-hexadecadienoyl-CoA + 2 Fe(III)-[cytochrome b5] + 2 H2O. The catalysed reaction is (9Z,12Z)-octadecadienoyl-CoA + 2 Fe(II)-[cytochrome b5] + O2 + 2 H(+) = (9Z,12Z,15Z)-octadecatrienoyl-CoA + 2 Fe(III)-[cytochrome b5] + 2 H2O. The enzyme catalyses (9Z)-heptadecenoyl-CoA + 2 Fe(II)-[cytochrome b5] + O2 + 2 H(+) = (9Z,12Z)-heptadecadienoyl-CoA + 2 Fe(III)-[cytochrome b5] + 2 H2O. It catalyses the reaction (9Z)-pentadecenoyl-CoA + 2 Fe(II)-[cytochrome b5] + O2 + 2 H(+) = (9Z,12Z)-pentadecadienoyl-CoA + 2 Fe(III)-[cytochrome b5] + 2 H2O. It carries out the reaction (6Z,9Z,12Z)-octadecatrienoyl-CoA + 2 Fe(II)-[cytochrome b5] + O2 + 2 H(+) = (6Z,9Z,12Z,15Z)-octadecatetraenoyl-CoA + 2 Fe(III)-[cytochrome b5] + 2 H2O. The catalysed reaction is (9Z)-tetradecenoyl-CoA + 2 Fe(II)-[cytochrome b5] + O2 + 2 H(+) = (9Z,12Z)-tetradecadienoyl-CoA + 2 Fe(III)-[cytochrome b5] + 2 H2O. The protein operates within lipid metabolism; polyunsaturated fatty acid biosynthesis. Functionally, can function as a Delta(12)/Delta(15) bifunctional desaturase and behaves as a nu +3' desaturase. Introduces a double bond in the fatty acid chain three carbons away from an existing double bond to biosynthesize polyunsaturated fatty acids (PUFAs) endogenously (PUFAs are essential for membrane structure and many cellular and physiological processes). Acts on a number of substrates like oleoyl-CoA ((9Z)-octadecenoyl-CoA, 18:1n-9), palmitoleoyl-CoA ((9Z)-hexadecenoyl-CoA, 16:1n-7), and gamma-linolenoyl-CoA ((6Z,9Z,12Z)-octadecatrienoyl-CoA, 18:3n-6), to generate linoleoyl-CoA ((9Z,12Z)-octadecadienoyl-CoA, 18:2n-6), (9Z,12Z)-hexadecadienoyl-CoA (16:2n-4) and (6Z,9Z,12Z,15Z)-octadecatetraenoyl-CoA (18:4n-3) respectively. Unlike plants, Caenorhabditis elegans desaturases seem to use fatty acyl-CoAs as substrates. The polypeptide is Delta(12) fatty acid desaturase fat-2 (fat-2) (Caenorhabditis elegans).